We begin with the raw amino-acid sequence, 374 residues long: Serpin B8 (374 aa).

The protein belongs to the serpin family. Ov-serpin subfamily.

It localises to the cytoplasm. Its function is as follows. Has an important role in epithelial desmosome-mediated cell-cell adhesion. In Bos taurus (Bovine), this protein is Serpin B8 (SERPINB8).